The primary structure comprises 556 residues: 2-succinyl-5-enolpyruvyl-6-hydroxy-3-cyclohexene-1-carboxylate synthase (556 aa).

This sequence belongs to the TPP enzyme family. MenD subfamily. As to quaternary structure, homodimer. The cofactor is Mg(2+). Mn(2+) serves as cofactor. It depends on thiamine diphosphate as a cofactor.

It carries out the reaction isochorismate + 2-oxoglutarate + H(+) = 5-enolpyruvoyl-6-hydroxy-2-succinyl-cyclohex-3-ene-1-carboxylate + CO2. Its pathway is quinol/quinone metabolism; 1,4-dihydroxy-2-naphthoate biosynthesis; 1,4-dihydroxy-2-naphthoate from chorismate: step 2/7. It functions in the pathway quinol/quinone metabolism; menaquinone biosynthesis. Functionally, catalyzes the thiamine diphosphate-dependent decarboxylation of 2-oxoglutarate and the subsequent addition of the resulting succinic semialdehyde-thiamine pyrophosphate anion to isochorismate to yield 2-succinyl-5-enolpyruvyl-6-hydroxy-3-cyclohexene-1-carboxylate (SEPHCHC). The polypeptide is 2-succinyl-5-enolpyruvyl-6-hydroxy-3-cyclohexene-1-carboxylate synthase (Escherichia coli O127:H6 (strain E2348/69 / EPEC)).